Consider the following 256-residue polypeptide: UPF0246 protein HCH_04801 (256 aa).

Belongs to the UPF0246 family.

This chain is UPF0246 protein HCH_04801, found in Hahella chejuensis (strain KCTC 2396).